Here is a 215-residue protein sequence, read N- to C-terminus: Large ribosomal subunit protein uL16 (215 aa).

Residues 1–22 (MGRRPARCYRQPKGKPYPKSRY) form a disordered region.

The protein belongs to the universal ribosomal protein uL16 family.

This chain is Large ribosomal subunit protein uL16 (RPL10), found in Tetrahymena thermophila (strain SB210).